A 153-amino-acid chain; its full sequence is MAKFLSQDQINEYKECFSLYDKQQRGKIKATDLLTVMRCLGASPTPGEAQRHLQTHRIDRNGELDFSTFLTIMHMQIKQEDPKKEILLAMLMADKEKKGYIMASELRSKLMQLGEKLTHKEVEDLFREAGIEPNGKVKYDEFIQKLTIPVRDY.

EF-hand domains are found at residues 8–43 (DQINEYKECFSLYDKQQRGKIKATDLLTVMRCLGAS), 44–79 (PTPGEAQRHLQTHRIDRNGELDFSTFLTIMHMQIKQ), 81–116 (DPKKEILLAMLMADKEKKGYIMASELRSKLMQLGEK), and 117–152 (LTHKEVEDLFREAGIEPNGKVKYDEFIQKLTIPVRD).

The protein belongs to the calmodulin family. Interacts with MYO7B; the interaction mediates the association of CALML4 with the IMAC/intermicrovillar adhesion complex. Interacts with MYO7A.

Its subcellular location is the cell projection. The protein localises to the microvillus. As part of the intermicrovillar adhesion complex/IMAC plays a role in epithelial brush border differentiation, controlling microvilli organization and length. Acts as a light chain for MYO7B and is required for efficient targeting of the IMAC to the tips of border brush microvilli. In Bos taurus (Bovine), this protein is Calmodulin-like protein 4 (CALML4).